A 180-amino-acid chain; its full sequence is NADH-quinone oxidoreductase subunit I (180 aa).

4Fe-4S ferredoxin-type domains lie at 50-80 (LTRN…LQKS) and 90-119 (KFFR…LMPD). Residues Cys60, Cys63, Cys66, Cys70, Cys99, Cys102, Cys105, and Cys109 each coordinate [4Fe-4S] cluster.

It belongs to the complex I 23 kDa subunit family. As to quaternary structure, NDH-1 is composed of 13 different subunits. Subunits NuoA, H, J, K, L, M, N constitute the membrane sector of the complex. It depends on [4Fe-4S] cluster as a cofactor.

The protein localises to the cell membrane. It catalyses the reaction a quinone + NADH + 5 H(+)(in) = a quinol + NAD(+) + 4 H(+)(out). In terms of biological role, NDH-1 shuttles electrons from NADH, via FMN and iron-sulfur (Fe-S) centers, to quinones in the respiratory chain. The immediate electron acceptor for the enzyme in this species is believed to be ubiquinone. Couples the redox reaction to proton translocation (for every two electrons transferred, four hydrogen ions are translocated across the cytoplasmic membrane), and thus conserves the redox energy in a proton gradient. The sequence is that of NADH-quinone oxidoreductase subunit I from Buchnera aphidicola subsp. Acyrthosiphon pisum (strain APS) (Acyrthosiphon pisum symbiotic bacterium).